The chain runs to 130 residues: Small ribosomal subunit protein uS11 (130 aa).

This sequence belongs to the universal ribosomal protein uS11 family. Part of the 30S ribosomal subunit. Interacts with proteins S7 and S18. Binds to IF-3.

Its function is as follows. Located on the platform of the 30S subunit, it bridges several disparate RNA helices of the 16S rRNA. Forms part of the Shine-Dalgarno cleft in the 70S ribosome. This chain is Small ribosomal subunit protein uS11, found in Xanthomonas campestris pv. campestris (strain B100).